A 666-amino-acid polypeptide reads, in one-letter code: Protein translocase subunit SecA 2 (666 aa).

Residues glutamine 119, 137–141 (GEGKS), and aspartate 546 each bind ATP.

This sequence belongs to the SecA family. Monomer and homodimer. Part of the essential Sec protein translocation apparatus which comprises SecA, SecYEG and auxiliary proteins SecDF-YajC and YidC.

The protein resides in the cell inner membrane. It localises to the cytoplasm. The catalysed reaction is ATP + H2O + cellular proteinSide 1 = ADP + phosphate + cellular proteinSide 2.. In terms of biological role, part of the Sec protein translocase complex. Interacts with the SecYEG preprotein conducting channel. Has a central role in coupling the hydrolysis of ATP to the transfer of proteins into and across the cell membrane, serving both as a receptor for the preprotein-SecB complex and as an ATP-driven molecular motor driving the stepwise translocation of polypeptide chains across the membrane. This chain is Protein translocase subunit SecA 2, found in Nitrosospira multiformis (strain ATCC 25196 / NCIMB 11849 / C 71).